The chain runs to 354 residues: DNA repair protein rhp57 (354 aa).

100–107 (GESGSGKS) provides a ligand contact to ATP.

This sequence belongs to the RecA family.

The protein localises to the nucleus. Its function is as follows. Involved in recombination DNA repair and in the repair of gamma-ray-induced damage. The sequence is that of DNA repair protein rhp57 (rhp57) from Schizosaccharomyces pombe (strain 972 / ATCC 24843) (Fission yeast).